The following is a 1006-amino-acid chain: 5'-3' exoribonuclease 2 (1006 aa).

Coiled coils occupy residues 256-287 (FAQD…NSEQ) and 453-544 (RLKK…AESE). Residues 492 to 529 (DDAVSKANKTNFNLAEVMKQKIINKKHRLEKDNEEEEI) form a required for retention in the nucleus region. The segment covering 561-575 (DRENSETTEVSRDSP) has biased composition (basic and acidic residues). 2 disordered regions span residues 561 to 584 (DREN…NVSE) and 939 to 1006 (HNYG…ANRR). The residue at position 574 (Ser-574) is a Phosphoserine. Positions 939–956 (HNYGRNSYNSQPGFNNSR) are enriched in polar residues. A run of 6 repeats spans residues 955–958 (SRYD), 961–964 (NNNY), 972–974 (NNN), 975–978 (YSGN), 984–986 (YSG), and 996–999 (SRYD). The segment at 955–999 (SRYDGGNNNYRQNSNYRNNNYSGNRNSGQYSGNSYSRNNKQSRYD) is 2 X 4 AA repeats of S-R-Y-D, N-N-N-Y, Y-S-G-N. Over residues 959 to 993 (GGNNNYRQNSNYRNNNYSGNRNSGQYSGNSYSRNN) the composition is skewed to low complexity. Residues 996 to 1006 (SRYDNSRANRR) show a composition bias toward basic and acidic residues.

Belongs to the 5'-3' exonuclease family. XRN2/RAT1 subfamily. Interacts with RAI1 and RTT103. Mg(2+) serves as cofactor. Mn(2+) is required as a cofactor.

The protein localises to the nucleus. With respect to regulation, inhibited by nucleoside 3', 5'-bisphosphates. Possesses 5'-&gt;3' exoribonuclease activity. Required for the processing of nuclear mRNA, rRNA and small nucleolar RNA (snoRNA) precursors. May promote termination of transcription by RNA polymerase II via the recruitment of 3'-end processing factors to the poly(A) site and by the degradation of nascent RNA downstream of the poly(A) site. The protein is 5'-3' exoribonuclease 2 (RAT1) of Saccharomyces cerevisiae (strain ATCC 204508 / S288c) (Baker's yeast).